A 148-amino-acid polypeptide reads, in one-letter code: uncharacterized protein (148 aa).

Residues 122 to 148 form a disordered region; it reads HNWRKRMGTRRGRHEQSPTSRPRKGPD. Positions 123–134 are enriched in basic residues; sequence NWRKRMGTRRGR.

This is an uncharacterized protein from Homo sapiens (Human).